Here is a 229-residue protein sequence, read N- to C-terminus: ACD11 homolog protein (229 aa).

Residues glutamate 84, lysine 88, arginine 123, arginine 127, and histidine 166 each contribute to the an N-acylsphingoid base 1-phosphate site.

It belongs to the GLTP family.

The chain is ACD11 homolog protein from Arabidopsis thaliana (Mouse-ear cress).